Consider the following 481-residue polypeptide: CUGBP Elav-like family member 6 (481 aa).

Residues 1–12 (MAAAPGGSAQPA) show a composition bias toward low complexity. The tract at residues 1 to 34 (MAAAPGGSAQPAGPGPRLGFSTADSGVGMSGLNP) is disordered. 3 RRM domains span residues 46–127 (IKLF…PAAS), 134–214 (RKLF…LADT), and 396–474 (CNLF…LKRP).

It belongs to the CELF/BRUNOL family. Expressed mainly in kidney, brain and testis and present in other tissues albeit at lower levels. Also expressed in fetal kidney.

The protein resides in the nucleus. It is found in the cytoplasm. In terms of biological role, RNA-binding protein implicated in the regulation of pre-mRNA alternative splicing. Mediates exon inclusion and/or exclusion in pre-mRNA that are subject to tissue-specific and developmentally regulated alternative splicing. Specifically activates exon 5 inclusion of TNNT2 in a muscle-specific splicing enhancer (MSE)-dependent manner. Promotes also exon exclusion of INSR pre-mRNA. This chain is CUGBP Elav-like family member 6 (CELF6), found in Homo sapiens (Human).